Reading from the N-terminus, the 1269-residue chain is Histone-lysine N-methyltransferase SETDB1 (1269 aa).

The stretch at 9–63 (KELGISMDDLRELIDRELEKIEFVKQRKAQLLEMEQLVKQKEAEVDHVDKLFDNA) forms a coiled coil. Disordered regions lie at residues 85 to 121 (YKESSSEDEGSSKPTEVIEIPDEDDDDVMSVGSGEAV) and 153 to 188 (QKKSDGPQTRFSSHPSSPTSSVGGSNQASASNDMSK). A compositionally biased stretch (acidic residues) spans 103 to 112 (EIPDEDDDDV). The span at 164–177 (SSHPSSPTSSVGGS) shows a compositional bias: low complexity. 2 Tudor domains span residues 250 to 312 (ENLT…RPWS) and 340 to 395 (VLLK…MFSM). The segment covering 396 to 414 (KTSNASTQEKQQAGQQRTR) has biased composition (polar residues). A disordered region spans residues 396 to 516 (KTSNASTQEK…FQSNQSVQPV (121 aa)). Positions 462 to 476 (DSQQAQSKKQVAKKS) are enriched in low complexity. Polar residues predominate over residues 486 to 497 (SGQSSPIPTESV). The MBD domain maps to 620-691 (HRGKNPLLVP…EMFCLDPYVL (72 aa)). One can recognise a Pre-SET domain in the interval 753–826 (VGCDCTDGCR…MCNNRLVQHG (74 aa)). Zn(2+) contacts are provided by Cys-755, Cys-757, Cys-761, Cys-767, Cys-769, Cys-807, Cys-811, Cys-813, and Cys-818. Residues 829–1244 (VRLQLFKTQN…AGTELTWDYN (416 aa)) form the SET domain. S-adenosyl-L-methionine-binding positions include 839-841 (KGW), Asp-877, and Tyr-879. A disordered region spans residues 894–1139 (EGYESDAKSS…VAASAGPVKR (246 aa)). The span at 919–932 (SGSEDQEESNDSSD) shows a compositional bias: acidic residues. 2 stretches are compositionally biased toward basic and acidic residues: residues 968 to 989 (ASKDSRTRDETTDCKLPEETSK) and 1021 to 1033 (ETDKPKESEEASK). A compositionally biased stretch (low complexity) spans 1078-1094 (TEEVLTLSSSSDSEVGS). Residues 1106–1120 (ATANDSDDIQTISSG) are compositionally biased toward polar residues. S-adenosyl-L-methionine is bound by residues Arg-1198 and 1201–1202 (NH). Zn(2+)-binding residues include Cys-1204, Cys-1257, Cys-1259, and Cys-1264. In terms of domain architecture, Post-SET spans 1253–1269 (KKLLCCCGSTECRGRLL).

The protein belongs to the class V-like SAM-binding methyltransferase superfamily. Histone-lysine methyltransferase family. Suvar3-9 subfamily.

The protein resides in the nucleus. It is found in the chromosome. The catalysed reaction is N(6),N(6)-dimethyl-L-lysyl(9)-[histone H3] + S-adenosyl-L-methionine = N(6),N(6),N(6)-trimethyl-L-lysyl(9)-[histone H3] + S-adenosyl-L-homocysteine + H(+). Histone methyltransferase that specifically trimethylates 'Lys-9' of histone H3. H3 'Lys-9' trimethylation represents a specific tag for epigenetic transcriptional repression by recruiting HP1 (CBX1, CBX3 and/or CBX5) proteins to methylated histones. Mainly functions in euchromatin regions, thereby playing a central role in the silencing of euchromatic genes. H3 'Lys-9' trimethylation is coordinated with DNA methylation. Plays a role in promoter hypermethylation and transcriptional silencing of tumor suppressor genes (TSGs) or other tumor-related genes. Also required to maintain a transcriptionally repressive state of genes in undifferentiated embryonic stem cells (ESCs). Associates at promoter regions of tumor suppressor genes (TSGs) leading to their gene silencing. This Xenopus laevis (African clawed frog) protein is Histone-lysine N-methyltransferase SETDB1 (setdb1).